The following is a 572-amino-acid chain: Phosphoenolpyruvate-protein phosphotransferase (572 aa).

Catalysis depends on histidine 190, which acts as the Tele-phosphohistidine intermediate. Phosphoenolpyruvate-binding residues include arginine 297 and arginine 333. Mg(2+)-binding residues include glutamate 432 and aspartate 456. Residues 455–456 (ND) and arginine 466 each bind phosphoenolpyruvate. Catalysis depends on cysteine 503, which acts as the Proton donor.

Belongs to the PEP-utilizing enzyme family. In terms of assembly, homodimer. Requires Mg(2+) as cofactor.

The protein resides in the cytoplasm. The enzyme catalyses L-histidyl-[protein] + phosphoenolpyruvate = N(pros)-phospho-L-histidyl-[protein] + pyruvate. General (non sugar-specific) component of the phosphoenolpyruvate-dependent sugar phosphotransferase system (sugar PTS). This major carbohydrate active-transport system catalyzes the phosphorylation of incoming sugar substrates concomitantly with their translocation across the cell membrane. Enzyme I transfers the phosphoryl group from phosphoenolpyruvate (PEP) to the phosphoryl carrier protein (HPr). The polypeptide is Phosphoenolpyruvate-protein phosphotransferase (ptsI) (Listeria monocytogenes serovar 1/2a (strain ATCC BAA-679 / EGD-e)).